The following is a 233-amino-acid chain: Large ribosomal subunit protein uL1 (233 aa).

Belongs to the universal ribosomal protein uL1 family. As to quaternary structure, part of the 50S ribosomal subunit.

In terms of biological role, binds directly to 23S rRNA. The L1 stalk is quite mobile in the ribosome, and is involved in E site tRNA release. Its function is as follows. Protein L1 is also a translational repressor protein, it controls the translation of the L11 operon by binding to its mRNA. This chain is Large ribosomal subunit protein uL1, found in Shewanella denitrificans (strain OS217 / ATCC BAA-1090 / DSM 15013).